A 666-amino-acid chain; its full sequence is Putative cysteine-rich receptor-like protein kinase 20 (666 aa).

Residues 1–23 (MSSLICFIFLFLFSFITSFTASA) form the signal peptide. Topologically, residues 24–264 (QNPFYLYHNC…PRPGKGGNSS (241 aa)) are extracellular. Gnk2-homologous domains lie at 27-131 (FYLY…NRNI) and 137-241 (TDGG…NYEF). N-linked (GlcNAc...) asparagine glycosylation is found at Asn-32, Asn-42, Asn-60, Asn-69, and Asn-103. Asn-262 is a glycosylation site (N-linked (GlcNAc...) asparagine). The chain crosses the membrane as a helical span at residues 265-285 (VIVIAVVVPITVLFLLFVAFF). At 286–666 (SVRRAKRKKT…EASITSVAPR (381 aa)) the chain is on the cytoplasmic side. The region spanning 344 to 623 (FLPINKLGQG…QMLTTSSIAL (280 aa)) is the Protein kinase domain. ATP contacts are provided by residues 350–358 (LGQGGFGEV) and Lys-372. Tyr-417 carries the phosphotyrosine modification. Asp-469 functions as the Proton acceptor in the catalytic mechanism. Residue Thr-509 is modified to Phosphothreonine. Phosphotyrosine is present on Tyr-517.

The protein belongs to the protein kinase superfamily. Ser/Thr protein kinase family. CRK subfamily.

The protein localises to the membrane. It catalyses the reaction L-seryl-[protein] + ATP = O-phospho-L-seryl-[protein] + ADP + H(+). It carries out the reaction L-threonyl-[protein] + ATP = O-phospho-L-threonyl-[protein] + ADP + H(+). This chain is Putative cysteine-rich receptor-like protein kinase 20 (CRK20), found in Arabidopsis thaliana (Mouse-ear cress).